The primary structure comprises 359 residues: Tryptophan 2,3-dioxygenase (359 aa).

Substrate contacts are provided by residues 38–42 (FIIVH) and Arg109. His295 contacts heme. Thr309 contacts substrate.

The protein belongs to the tryptophan 2,3-dioxygenase family. Homotetramer. The cofactor is heme.

It carries out the reaction L-tryptophan + O2 = N-formyl-L-kynurenine. It participates in amino-acid degradation; L-tryptophan degradation via kynurenine pathway; L-kynurenine from L-tryptophan: step 1/2. Heme-dependent dioxygenase that catalyzes the oxidative cleavage of the L-tryptophan (L-Trp) pyrrole ring and converts L-tryptophan to N-formyl-L-kynurenine. Catalyzes the oxidative cleavage of the indole moiety. The protein is Tryptophan 2,3-dioxygenase of Bdellovibrio bacteriovorus (strain ATCC 15356 / DSM 50701 / NCIMB 9529 / HD100).